The following is a 1512-amino-acid chain: Sterol 3-beta-glucosyltransferase (1512 aa).

Disordered stretches follow at residues 22 to 50 (FSGS…YHSL) and 150 to 222 (DEHT…DTDV). Residues 156-169 (SEEEDSADKEEESI) are compositionally biased toward acidic residues. Positions 190-222 (TTATLITTQITRTKTATTATPTPTPTSSVDTDV) are enriched in low complexity. Residues 296 to 331 (LQRVFDLSDEDTFCGNYSAWLIKDVLLQGHVYLTKD) enclose the GRAM 1 domain. Positions 359 to 520 (SIVYSGNLGL…WCNNITKLIF (162 aa)) constitute a PH domain. Residues 816 to 880 (RNFQSHFSTN…TDIEEVRASR (65 aa)) form the GRAM 2 domain. The UDP-alpha-D-glucose site is built by serine 1024, arginine 1025, aspartate 1027, asparagine 1299, isoleucine 1328, histidine 1330, histidine 1343, serine 1346, glycine 1347, threonine 1348, aspartate 1367, and glutamine 1368. A disordered region spans residues 1450-1512 (YKRHHPVPSG…NNSPSQNSSN (63 aa)). The segment covering 1467 to 1493 (TDSDDYDDDEDDDESDKDDEEEEEENS) has biased composition (acidic residues). A compositionally biased stretch (polar residues) spans 1501 to 1512 (GVNNSPSQNSSN).

This sequence belongs to the glycosyltransferase 28 family.

The protein localises to the cytoplasm. Its subcellular location is the membrane. It carries out the reaction a sterol + UDP-alpha-D-glucose = a sterol 3-beta-D-glucoside + UDP + H(+). The enzyme catalyses ergosterol + UDP-alpha-D-glucose = ergosteryl 3-beta-D-glucoside + UDP + H(+). Functionally, sterol glycosyltransferase responsible for the glycosylation of ergosterol to form ergosterol-glucoside. The polypeptide is Sterol 3-beta-glucosyltransferase (Candida albicans (strain SC5314 / ATCC MYA-2876) (Yeast)).